Reading from the N-terminus, the 755-residue chain is MKHIGRIVSFPIGLVLIAVGIIIFVVVNRTIKDEFKKAAVVIPDNGAEEIVDPWVRFIGNEGDPNNVRTYTFMAYNLTNPIETMQGHLPKYQEVGPYSYNYIYERINANLYEDDEKLSFKLWKRYFPIVADGYRDPTKDTIYHFNLVYGAAVKQAGSEVALSVALTAAAMGKIITGLTDPSFKVKAGFAAAPTVTAGAFSNLLTAAGNDPATACGLWQTSTSSSTPLVPFSVPIIAGSPSDISQAQCQALFDPSNKFSLTDPTNVGVYLLNPAGSKAALLASPFGLTSVQADLIMKYQLALTSTFVPTTLVSRFAECSDPKTCTNNPLYFGLLQWAKNPSLLGQSVFAIPNSGVPAAPEFGIYTSSELSLTKAGSLFLNTSTINLITPTSIGTILVYGQKLKADPTSIPPALYAPFSSGEFDAIVKYTGYIMAAFVDGDIIKNQIFKDYQGGPIVKHTVHDFLFNSTDPLLKLMYPDTPSAWVSSPLDNIQDVKVANATLHTDEIYTGVGDIDLVSSPITFEGEEELNYNKKIKVSGSFAEQLPPSYLSKDPEAPVNVFTDEFARSLSFRKEVGGNFGGIPYYRYRINESNWEINPDYFQTIPYLLNLTSIKSGAPAYLSRPRLKGIDVGYYYKAGITDLINDDEDLDVFADYEPRSGKAIHGRYSLQVNTYIQGSDGTNSTLYNKYSAFRSDVVHPMFWGVNIIAATQEQIDILTKAYKVDSFRYAITVILIVVGGFLSLISGGLFVLDKIIDL.

Topologically, residues 1 to 6 (MKHIGR) are cytoplasmic. The chain crosses the membrane as a helical span at residues 7–27 (IVSFPIGLVLIAVGIIIFVVV). N28, N76, N379, N465, N497, N588, N607, and N680 each carry an N-linked (GlcNAc...) asparagine glycan. The Lumenal portion of the chain corresponds to 28-727 (NRTIKDEFKK…AYKVDSFRYA (700 aa)). Residues 728 to 748 (ITVILIVVGGFLSLISGGLFV) form a helical membrane-spanning segment. The Cytoplasmic portion of the chain corresponds to 749-755 (LDKIIDL). The short motif at 752 to 753 (II) is the Di-leucine motif element.

This sequence belongs to the CD36 family. Post-translationally, heavily glycosylated.

It localises to the lysosome membrane. Its function is as follows. May act as a lysosomal receptor. May be involved in macropinocytosis and fluid phase exocytosis. In Dictyostelium discoideum (Social amoeba), this protein is Lysosome membrane protein 2-B (lmpB).